A 153-amino-acid chain; its full sequence is Vasotocin-neurophysin VT 1 (153 aa).

The N-terminal stretch at methionine 1–alanine 19 is a signal peptide. Cysteine 20 and cysteine 25 form a disulfide bridge. Glycine amide is present on glycine 28. Disulfide bonds link cysteine 41–cysteine 85, cysteine 44–cysteine 58, cysteine 52–cysteine 75, cysteine 59–cysteine 65, cysteine 92–cysteine 105, cysteine 99–cysteine 117, and cysteine 106–cysteine 111.

Belongs to the vasopressin/oxytocin family. In terms of processing, seven disulfide bonds are present in neurophysin.

It is found in the secreted. In terms of biological role, vasotocin is probably an antidiuretic hormone. This is Vasotocin-neurophysin VT 1 from Takifugu rubripes (Japanese pufferfish).